The following is a 113-amino-acid chain: Iron-sulfur cluster insertion protein ErpA (113 aa).

Iron-sulfur cluster-binding residues include Cys41, Cys105, and Cys107.

It belongs to the HesB/IscA family. As to quaternary structure, homodimer. It depends on iron-sulfur cluster as a cofactor.

Its function is as follows. Required for insertion of 4Fe-4S clusters for at least IspG. This Actinobacillus pleuropneumoniae serotype 5b (strain L20) protein is Iron-sulfur cluster insertion protein ErpA.